The sequence spans 526 residues: Osmo-independent choline transporter BetT1 (526 aa).

Residues 1–17 (MWSKRDEQKTYPPIRLN) are Cytoplasmic-facing. The chain crosses the membrane as a helical span at residues 18-38 (PFVFWSSAISISIFGMLFVLF). Residues 39-56 (PETSQHGLTWIQQQVNQL) are Periplasmic-facing. The chain crosses the membrane as a helical span at residues 57–77 (FGWYYMLVIILSLGFVAWLAF). At 78–93 (SQVGNIPLGKAQDKPE) the chain is on the cytoplasmic side. A helical membrane pass occupies residues 94–114 (FGYLVWTSMLFSAGIGIALLY). The Periplasmic portion of the chain corresponds to 115 to 148 (YGVAEPVDHFLRPPEGQGGTVEAAQNAMMYSFLH). The helical transmembrane segment at 149-169 (WGIHGWVLYALVGVTLGYFAF) threads the bilayer. Topologically, residues 170-200 (RRDLPLALRSALYPIFGERIHGLVGHMVDGF) are cytoplasmic. Residues 201 to 221 (GILATIISLVTNLGIGALVMI) traverse the membrane as a helical segment. Residues 222–236 (SGISYLFPDLPNTSS) lie on the Periplasmic side of the membrane. The helical transmembrane segment at 237 to 257 (TLVVTVIMMMLVATLTTVIGI) threads the bilayer. Residues 258–272 (EKGLAWLSRINLRLL) are Cytoplasmic-facing. A helical transmembrane segment spans residues 273–293 (YLLLLFVFLTGPTNHLLNGLV). Residues 294-323 (QNTGDYLSHFVQKSFDLYLYDKNATGWLAS) lie on the Periplasmic side of the membrane. Residues 324-344 (WTIFYWAWWIAWAPFVGMFIA) form a helical membrane-spanning segment. Over 345-354 (RISKGRTIRE) the chain is Cytoplasmic. The chain crosses the membrane as a helical span at residues 355–375 (VVLGVCLIPLGFTLAWISIFG). The Periplasmic segment spans residues 376–417 (NTAIDLILNHGQQIIGSLVIQDPALSLFKLLEYLPFHPYVAG). Residues 418-438 (IVVVICFVLFLTPVGSGTLMI) form a helical membrane-spanning segment. Over 439–457 (ANLSSQGGSSDSDSPIWLR) the chain is Cytoplasmic. The chain crosses the membrane as a helical span at residues 458–478 (VFWSIAITIVSIGLLLAGSFS). Topologically, residues 479-482 (AMQS) are periplasmic. The helical transmembrane segment at 483–503 (AVVLCGLPFSVILLLYMFGLA) threads the bilayer. Residues 504-526 (KALKQETQQPVVESHTTETSGSD) are Cytoplasmic-facing.

Belongs to the BCCT transporter (TC 2.A.15) family.

It localises to the cell inner membrane. Functionally, sodium-independent high-affinity choline uptake system. Uptake is not proton coupled. May play a role in metabolic adaptation to choline-containing environments. The sequence is that of Osmo-independent choline transporter BetT1 from Acinetobacter baylyi (strain ATCC 33305 / BD413 / ADP1).